The following is a 201-amino-acid chain: Small ribosomal subunit protein uS2 (201 aa).

Belongs to the universal ribosomal protein uS2 family.

This Nanoarchaeum equitans (strain Kin4-M) protein is Small ribosomal subunit protein uS2.